The chain runs to 570 residues: Low-affinity glucose transporter HXT1 (570 aa).

A compositionally biased stretch (polar residues) spans 1–20 (MNSTPDLISPQKSNSSNSYE). Residues 1 to 51 (MNSTPDLISPQKSNSSNSYELESGRSKAMNTPEGKNESFHDNLSESQVQPA) are disordered. At 1 to 60 (MNSTPDLISPQKSNSSNSYELESGRSKAMNTPEGKNESFHDNLSESQVQPAVAPPNTGKG) the chain is on the cytoplasmic side. Residues Ser23, Ser38, and Ser44 each carry the phosphoserine modification. A compositionally biased stretch (basic and acidic residues) spans 34 to 43 (GKNESFHDNL). A helical transmembrane segment spans residues 61–81 (VYVTVSICCVMVAFGGFIFGW). The Extracellular portion of the chain corresponds to 82 to 116 (DTGTISGFVAQTDFLRRFGMKHHDGSHYLSKVRTG). Residues 117–137 (LIVSIFNIGCAIGGIVLAKLG) traverse the membrane as a helical segment. Residues 138–143 (DMYGRR) lie on the Cytoplasmic side of the membrane. Residues 144–164 (IGLIVVVVIYTIGIIIQIASI) traverse the membrane as a helical segment. At 165–174 (NKWYQYFIGR) the chain is on the extracellular side. The chain crosses the membrane as a helical span at residues 175-195 (IISGLGVGGITVLSPMLISEV). The Cytoplasmic segment spans residues 196-201 (APSEMR). A helical membrane pass occupies residues 202-222 (GTLVSCYQVMITLGIFLGYCT). At 223–236 (NFGTKNYSNSVQWR) the chain is on the extracellular side. Asn228 carries N-linked (GlcNAc...) asparagine glycosylation. Residues 237 to 257 (VPLGLCFAWALFMIGGMMFVP) form a helical membrane-spanning segment. Residues 258–340 (ESPRYLVEAG…IQSLQQLTGD (83 aa)) are Cytoplasmic-facing. Residues 341-357 (NYFFYYGTIVFQAVGLS) form a helical membrane-spanning segment. The Extracellular portion of the chain corresponds to 358 to 363 (DSFETS). Residues 364 to 381 (IVFGVVNFFSTCCSLYTV) form a helical membrane-spanning segment. At 382-388 (DRFGRRN) the chain is on the cytoplasmic side. The helical transmembrane segment at 389–409 (CLMWGAVGMVCCYVVYASVGV) threads the bilayer. Residues 410-431 (TRLWPNGQDQPSSKGAGNCMIV) are Extracellular-facing. A helical membrane pass occupies residues 432-452 (FACFYIFCFATTWAPIAYVVI). Residues 453 to 469 (SECFPLRVKSKCMSIAS) lie on the Cytoplasmic side of the membrane. A helical transmembrane segment spans residues 470 to 490 (AANWIWGFLISFFTPFITGAI). A topological domain (extracellular) is located at residue Asn491. Residues 492 to 512 (FYYGYVFMGCMVFAYFYVFFF) form a helical membrane-spanning segment. The Cytoplasmic segment spans residues 513–570 (VPETKGLSLEEVNDMYAEGVLPWKSASWVPVSKRGADYNADDLMHDDQPFYKSLFSRK).

This sequence belongs to the major facilitator superfamily. Sugar transporter (TC 2.A.1.1) family.

The protein resides in the membrane. Functionally, low-affinity glucose transporter. HXT1 is as well involved in the transport of mannose. This is Low-affinity glucose transporter HXT1 (HXT1) from Saccharomyces cerevisiae (strain ATCC 204508 / S288c) (Baker's yeast).